The chain runs to 331 residues: Leucine-rich repeat-containing protein 26 (331 aa).

The signal sequence occupies residues 1–26; the sequence is MRGSFFSRLPPQLSLLLLLSLRRVWT. Residues 27–261 are Extracellular-facing; the sequence is QEDIGTAPSK…QCTQSLAARD (235 aa). An LRRNT domain is found at 34-71; the sequence is PSKSPVAPECPEACSCSLGGKANCSALALPAVPADLSW. 2 cysteine pairs are disulfide-bonded: Cys-43–Cys-49 and Cys-47–Cys-57. LRR repeat units follow at residues 72 to 93, 96 to 117, 120 to 141, 144 to 165, and 168 to 191; these read QVRS…AFAN, ALLY…AFWG, VLQW…TFAP, ALSF…ILGP, and LLRV…NNLP. The LRRCT domain maps to 201-255; the sequence is NPWTCNCALRPLCTWLRKHPRPASETETLLCVSPRLQTLSLLTAFPDAAFKQCTQ. Intrachain disulfides connect Cys-205-Cys-231 and Cys-207-Cys-253. A helical membrane pass occupies residues 262-282; it reads LAVVYALGPVSFLASLAICLA. The Cytoplasmic segment spans residues 283–331; the sequence is LGSVLTACGARRRRRRRTTVRHLLRRQLDPEGPPSLEDAGSPVTAAIQA. Positions 310–331 are disordered; the sequence is LDPEGPPSLEDAGSPVTAAIQA.

In terms of assembly, interacts with KCNMA1.

Its subcellular location is the cell membrane. It is found in the cytoplasm. The protein localises to the cytoskeleton. Its function is as follows. Auxiliary protein of the large-conductance, voltage and calcium-activated potassium channel (BK alpha). Required for the conversion of BK alpha channels from a high-voltage to a low-voltage activated channel type in non-excitable cells. These are characterized by negative membrane voltages and constant low levels of calcium. The polypeptide is Leucine-rich repeat-containing protein 26 (Lrrc26) (Mus musculus (Mouse)).